The sequence spans 131 residues: C-type natriuretic peptide 1 (131 aa).

The N-terminal stretch at Met-1–Ala-22 is a signal peptide. The propeptide occupies Arg-23–Arg-109. Cys-115 and Cys-131 form a disulfide bridge.

Belongs to the natriuretic peptide family. In terms of tissue distribution, brain and spinal cord.

The protein resides in the secreted. Exhibits natriuretic and vasodepressant activity. Has cGMP-stimulating activity. May help to regulate body fluid homeostasis in a variety of aquatic environments. The protein is C-type natriuretic peptide 1 of Oryzias latipes (Japanese rice fish).